A 247-amino-acid chain; its full sequence is PF03932 family protein CutC (247 aa).

Belongs to the CutC family.

The protein localises to the cytoplasm. The sequence is that of PF03932 family protein CutC from Vibrio campbellii (strain ATCC BAA-1116).